Consider the following 351-residue polypeptide: Succinylglutamate desuccinylase (351 aa).

3 residues coordinate Zn(2+): His73, Glu76, and His168. Glu231 is an active-site residue.

This sequence belongs to the AspA/AstE family. Succinylglutamate desuccinylase subfamily. Requires Zn(2+) as cofactor.

The catalysed reaction is N-succinyl-L-glutamate + H2O = L-glutamate + succinate. The protein operates within amino-acid degradation; L-arginine degradation via AST pathway; L-glutamate and succinate from L-arginine: step 5/5. Its function is as follows. Transforms N(2)-succinylglutamate into succinate and glutamate. This Burkholderia lata (strain ATCC 17760 / DSM 23089 / LMG 22485 / NCIMB 9086 / R18194 / 383) protein is Succinylglutamate desuccinylase.